The sequence spans 303 residues: UDP-3-O-acyl-N-acetylglucosamine deacetylase (303 aa).

Zn(2+) is bound by residues His78, His237, and Asp241. His264 acts as the Proton donor in catalysis.

This sequence belongs to the LpxC family. The cofactor is Zn(2+).

The catalysed reaction is a UDP-3-O-[(3R)-3-hydroxyacyl]-N-acetyl-alpha-D-glucosamine + H2O = a UDP-3-O-[(3R)-3-hydroxyacyl]-alpha-D-glucosamine + acetate. It participates in glycolipid biosynthesis; lipid IV(A) biosynthesis; lipid IV(A) from (3R)-3-hydroxytetradecanoyl-[acyl-carrier-protein] and UDP-N-acetyl-alpha-D-glucosamine: step 2/6. Catalyzes the hydrolysis of UDP-3-O-myristoyl-N-acetylglucosamine to form UDP-3-O-myristoylglucosamine and acetate, the committed step in lipid A biosynthesis. This chain is UDP-3-O-acyl-N-acetylglucosamine deacetylase, found in Saccharophagus degradans (strain 2-40 / ATCC 43961 / DSM 17024).